The following is a 197-amino-acid chain: Putative glutathione-dependent formaldehyde-activating enzyme (197 aa).

The CENP-V/GFA domain occupies 22–171 (FPGGKLYCHC…LKSLGLENYD (150 aa)). Zn(2+) contacts are provided by Cys29, Cys31, Cys50, Cys52, Cys55, Cys97, and Cys100.

It belongs to the Gfa family. Requires Zn(2+) as cofactor.

It carries out the reaction S-(hydroxymethyl)glutathione = glutathione + formaldehyde. It functions in the pathway one-carbon metabolism; formaldehyde degradation; formate from formaldehyde (glutathione route): step 1/3. Its function is as follows. Catalyzes the condensation of formaldehyde and glutathione to S-hydroxymethylglutathione. In Emericella nidulans (strain FGSC A4 / ATCC 38163 / CBS 112.46 / NRRL 194 / M139) (Aspergillus nidulans), this protein is Putative glutathione-dependent formaldehyde-activating enzyme.